We begin with the raw amino-acid sequence, 248 residues long: Putative eukaryotic initiation factor 4A-like protein (248 aa).

A Q motif motif is present at residues 14 to 42 (VGFASLGLNEQLINNIKRYGITKLTPFQM). One can recognise a Helicase ATP-binding domain in the interval 45 to 239 (IKEIKENSNV…NTFIKIPKII (195 aa)). 58–65 (SIEGTGRT) contributes to the ATP binding site. The short motif at 185-188 (DELD) is the DEAD box element.

Belongs to the DEAD box helicase family. eIF4A subfamily.

The sequence is that of Putative eukaryotic initiation factor 4A-like protein from Dictyostelium discoideum (Social amoeba).